Reading from the N-terminus, the 360-residue chain is Casein kinase II subunit alpha (360 aa).

A Protein kinase domain is found at 38–323; sequence YQLVRKLGRG…AQEAMGHEYF (286 aa). Residues 44–52 and Lys-67 contribute to the ATP site; that span reads LGRGKYSEV. The Proton acceptor role is filled by Asp-155. Residues 334–360 form a disordered region; sequence NGTEQADGQGASNSASSQSSDAKIDGA. Low complexity predominate over residues 338-354; that stretch reads QADGQGASNSASSQSSD.

Belongs to the protein kinase superfamily. Ser/Thr protein kinase family. CK2 subfamily. In terms of assembly, tetramer of two alpha and two beta chains. As to expression, expressed in a subset of the adult male sensory neurons: CEM head neurons, ray RnB neurons, and hook HOB tail neurons.

It localises to the cell projection. It is found in the axon. The protein localises to the cilium. The protein resides in the dendrite. Its subcellular location is the perikaryon. The catalysed reaction is L-seryl-[protein] + ATP = O-phospho-L-seryl-[protein] + ADP + H(+). The enzyme catalyses L-threonyl-[protein] + ATP = O-phospho-L-threonyl-[protein] + ADP + H(+). Its function is as follows. Casein kinases are operationally defined by their preferential utilization of acidic proteins such as caseins as substrates. The alpha chain contains the catalytic site. May participate in Wnt signaling. Modulates two aspects of male mating behavior; response to hermaphrodite contact and vulval location, acting in the same pathway as lov-1 and pkd-2. This is Casein kinase II subunit alpha (kin-3) from Caenorhabditis elegans.